The primary structure comprises 508 residues: Vacuolar serine-type carboxypeptidase ATG42 (508 aa).

Residues 1-24 (MKYLNLVFVLQLLISIKYASFGRA) form the signal peptide. Cystine bridges form between Cys-132–Cys-375, Cys-267–Cys-281, Cys-291–Cys-314, Cys-298–Cys-307, and Cys-336–Cys-345. N-linked (GlcNAc...) asparagine glycosylation occurs at Asn-163. Ser-219 is a catalytic residue. An N-linked (GlcNAc...) asparagine glycan is attached at Asn-242. N-linked (GlcNAc...) asparagine glycans are attached at residues Asn-339 and Asn-371. The active site involves Asp-415. Substrate is bound at residue Cys-418. Residue His-474 is part of the active site. Met-475 serves as a coordination point for substrate.

It belongs to the peptidase S10 family.

Its subcellular location is the vacuole lumen. It carries out the reaction Release of a C-terminal amino acid with broad specificity.. Vacuolar serine-type carboxypeptidase involved in vacuolar zymogen activation, breakdown of the autophagic body, and autophagosome-dependent protein synthesis. Plays a key role in phytochelatin (PC) synthesis from glutathione (GSH) by cleaving the Gly from GSH and form the PC-peptides of the structure (gamma-Glu-Cys)2-Gly. Also involved in resistance to xenobiotics via the degradation of glutathione-S-conjugates. The sequence is that of Vacuolar serine-type carboxypeptidase ATG42 from Saccharomyces cerevisiae (strain ATCC 204508 / S288c) (Baker's yeast).